We begin with the raw amino-acid sequence, 307 residues long: Acetaldehyde dehydrogenase 2 (307 aa).

The active-site Acyl-thioester intermediate is Cys131. NAD(+) is bound by residues 162–170 and Asn273; that span reads SVGPGTRKN.

It belongs to the acetaldehyde dehydrogenase family.

The catalysed reaction is acetaldehyde + NAD(+) + CoA = acetyl-CoA + NADH + H(+). The protein is Acetaldehyde dehydrogenase 2 (aphF) of Comamonas testosteroni (Pseudomonas testosteroni).